Consider the following 70-residue polypeptide: Consomatin Mrc3 (70 aa).

The N-terminal stretch at 1–22 (MQTAYWVMVMMMVWITAPLSEG) is a signal peptide. A propeptide spanning residues 23 to 55 (GKLNDVIRGLVPDDVTPKRILQSLISRRRFDGR) is cleaved from the precursor. A disulfide bond links cysteine 62 and cysteine 67. Tryptophan 64 is modified (D-tryptophan). Residue proline 68 is modified to 4-hydroxyproline. Tyrosine 69 carries the tyrosine amide modification.

This sequence belongs to the conotoxin C superfamily. Consomatin family. In terms of tissue distribution, expressed by the venom duct.

It is found in the secreted. Moderately activates human somatostatin receptors (SSTR) with a preferential activation of SSTR1 and SSTR4. In vivo, does not cause behavioral changes in mice within a few minutes of intracranial injection, but causes a progressive loss of movement thereafter. Four to five hours after injection, mice recover, even with the highest dose tested. Shows antinociception and antihyperalgesia activities in two mouse models of acute pain, most probably by acting outside the central nervous system. The chain is Consomatin Mrc3 from Conus mercator (Trader cone).